Here is a 617-residue protein sequence, read N- to C-terminus: uncharacterized protein (617 aa).

One can recognise a B12-binding N-terminal domain in the interval 33–134; it reads TEDDFRGEKF…FXNATKQKGS (102 aa). Methylcob(III)alamin is bound by residues E84, 146 to 150, H149, S194, T198, and A251; that span reads GDVHD. A B12-binding domain is found at 136-272; that stretch reads NGKVVIATVK…NPEGRAALWE (137 aa). An AdoMet activation domain is found at 288-617; that stretch reads SKPLRKQLSI…MMKWLGVAMK (330 aa). Residues D337, R528, and 583 to 584 each bind S-adenosyl-L-methionine; that span reads YF.

The protein belongs to the vitamin-B12 dependent methionine synthase family.

This is an uncharacterized protein from Haemophilus influenzae (strain ATCC 51907 / DSM 11121 / KW20 / Rd).